The sequence spans 399 residues: Sister chromatid cohesion protein DCC1 (399 aa).

This sequence belongs to the DCC1 family. As to quaternary structure, component of the CTF18-RFC complex which consists of CTF8, CTF18, DSCC1 and the RFC complex. Interacts with CTF8 and CTF18. Interacts with DDX11.

It is found in the nucleus. Loads PCNA onto primed templates regulating velocity, spacing and restart activity of replication forks. May couple DNA replication to sister chromatid cohesion through regulation of the acetylation of the cohesin subunit SMC3. This Mus musculus (Mouse) protein is Sister chromatid cohesion protein DCC1 (DSCC1).